We begin with the raw amino-acid sequence, 168 residues long: ATP synthase subunit b (168 aa).

The chain crosses the membrane as a helical span at residues 10–30 (LYLGDMLFYLVSFLIMAALVW). Residues 61-80 (EAQKLAAKRQEELKGSRQEA) form a disordered region.

Belongs to the ATPase B chain family. As to quaternary structure, F-type ATPases have 2 components, F(1) - the catalytic core - and F(0) - the membrane proton channel. F(1) has five subunits: alpha(3), beta(3), gamma(1), delta(1), epsilon(1). F(0) has three main subunits: a(1), b(2) and c(10-14). The alpha and beta chains form an alternating ring which encloses part of the gamma chain. F(1) is attached to F(0) by a central stalk formed by the gamma and epsilon chains, while a peripheral stalk is formed by the delta and b chains.

The protein resides in the cell membrane. F(1)F(0) ATP synthase produces ATP from ADP in the presence of a proton or sodium gradient. F-type ATPases consist of two structural domains, F(1) containing the extramembraneous catalytic core and F(0) containing the membrane proton channel, linked together by a central stalk and a peripheral stalk. During catalysis, ATP synthesis in the catalytic domain of F(1) is coupled via a rotary mechanism of the central stalk subunits to proton translocation. Functionally, component of the F(0) channel, it forms part of the peripheral stalk, linking F(1) to F(0). This Limosilactobacillus fermentum (strain NBRC 3956 / LMG 18251) (Lactobacillus fermentum) protein is ATP synthase subunit b.